Reading from the N-terminus, the 459-residue chain is Argininosuccinate lyase (459 aa).

It belongs to the lyase 1 family. Argininosuccinate lyase subfamily.

Its subcellular location is the cytoplasm. The enzyme catalyses 2-(N(omega)-L-arginino)succinate = fumarate + L-arginine. It participates in amino-acid biosynthesis; L-arginine biosynthesis; L-arginine from L-ornithine and carbamoyl phosphate: step 3/3. This chain is Argininosuccinate lyase, found in Staphylococcus aureus (strain Mu3 / ATCC 700698).